The chain runs to 212 residues: Thymidylate kinase (212 aa).

11–18 (GPDGAGKS) is a binding site for ATP.

This sequence belongs to the thymidylate kinase family.

It carries out the reaction dTMP + ATP = dTDP + ADP. Its function is as follows. Phosphorylation of dTMP to form dTDP in both de novo and salvage pathways of dTTP synthesis. The sequence is that of Thymidylate kinase from Streptococcus gordonii (strain Challis / ATCC 35105 / BCRC 15272 / CH1 / DL1 / V288).